Here is a 347-residue protein sequence, read N- to C-terminus: UPF0324 membrane protein Atu0671 (347 aa).

10 helical membrane passes run 15-37 (LRWL…AAIL), 50-72 (WLGD…SLPV), 105-127 (AGGL…SYAA), 140-162 (LIAC…AIGA), 172-194 (AFTA…LLGL), 201-223 (IFAG…LGAV), 233-250 (LIRV…SVIH), 263-282 (MVPW…SFGL), 287-309 (LLSP…LGLS), and 322-344 (VIIA…ILLT).

The protein belongs to the UPF0324 family.

It is found in the cell membrane. The polypeptide is UPF0324 membrane protein Atu0671 (Agrobacterium fabrum (strain C58 / ATCC 33970) (Agrobacterium tumefaciens (strain C58))).